The chain runs to 209 residues: Ribosomal RNA large subunit methyltransferase E (209 aa).

The S-adenosyl-L-methionine site is built by G63, W65, D83, D99, and D124. The Proton acceptor role is filled by K164.

It belongs to the class I-like SAM-binding methyltransferase superfamily. RNA methyltransferase RlmE family.

Its subcellular location is the cytoplasm. The enzyme catalyses uridine(2552) in 23S rRNA + S-adenosyl-L-methionine = 2'-O-methyluridine(2552) in 23S rRNA + S-adenosyl-L-homocysteine + H(+). Specifically methylates the uridine in position 2552 of 23S rRNA at the 2'-O position of the ribose in the fully assembled 50S ribosomal subunit. The protein is Ribosomal RNA large subunit methyltransferase E of Alkalilimnicola ehrlichii (strain ATCC BAA-1101 / DSM 17681 / MLHE-1).